The chain runs to 188 residues: Elongation factor P (188 aa).

Belongs to the elongation factor P family.

It is found in the cytoplasm. Its pathway is protein biosynthesis; polypeptide chain elongation. Its function is as follows. Involved in peptide bond synthesis. Stimulates efficient translation and peptide-bond synthesis on native or reconstituted 70S ribosomes in vitro. Probably functions indirectly by altering the affinity of the ribosome for aminoacyl-tRNA, thus increasing their reactivity as acceptors for peptidyl transferase. The sequence is that of Elongation factor P from Wolbachia pipientis subsp. Culex pipiens (strain wPip).